A 582-amino-acid polypeptide reads, in one-letter code: Formate--tetrahydrofolate ligase (582 aa).

65–72 contributes to the ATP binding site; that stretch reads TPLGEGKT.

It belongs to the formate--tetrahydrofolate ligase family.

It catalyses the reaction (6S)-5,6,7,8-tetrahydrofolate + formate + ATP = (6R)-10-formyltetrahydrofolate + ADP + phosphate. It functions in the pathway one-carbon metabolism; tetrahydrofolate interconversion. This chain is Formate--tetrahydrofolate ligase, found in Vibrio atlanticus (strain LGP32) (Vibrio splendidus (strain Mel32)).